Reading from the N-terminus, the 190-residue chain is Threonylcarbamoyl-AMP synthase (190 aa).

The region spanning 7–190 (RAALSDVLQA…ALTGKQFRQG (184 aa)) is the YrdC-like domain.

This sequence belongs to the SUA5 family. TsaC subfamily.

Its subcellular location is the cytoplasm. It catalyses the reaction L-threonine + hydrogencarbonate + ATP = L-threonylcarbamoyladenylate + diphosphate + H2O. Functionally, required for the formation of a threonylcarbamoyl group on adenosine at position 37 (t(6)A37) in tRNAs that read codons beginning with adenine. Catalyzes the conversion of L-threonine, HCO(3)(-)/CO(2) and ATP to give threonylcarbamoyl-AMP (TC-AMP) as the acyladenylate intermediate, with the release of diphosphate. The protein is Threonylcarbamoyl-AMP synthase of Yersinia enterocolitica serotype O:8 / biotype 1B (strain NCTC 13174 / 8081).